A 377-amino-acid polypeptide reads, in one-letter code: 3-dehydroquinate synthase (377 aa).

NAD(+)-binding positions include 115-119, 139-140, lysine 152, and lysine 162; these read GVIGD and TS. 3 residues coordinate Zn(2+): glutamate 195, histidine 257, and histidine 276.

The protein belongs to the sugar phosphate cyclases superfamily. Dehydroquinate synthase family. The cofactor is Co(2+). It depends on Zn(2+) as a cofactor. Requires NAD(+) as cofactor.

It localises to the cytoplasm. It catalyses the reaction 7-phospho-2-dehydro-3-deoxy-D-arabino-heptonate = 3-dehydroquinate + phosphate. Its pathway is metabolic intermediate biosynthesis; chorismate biosynthesis; chorismate from D-erythrose 4-phosphate and phosphoenolpyruvate: step 2/7. Its function is as follows. Catalyzes the conversion of 3-deoxy-D-arabino-heptulosonate 7-phosphate (DAHP) to dehydroquinate (DHQ). This is 3-dehydroquinate synthase from Rhizobium etli (strain ATCC 51251 / DSM 11541 / JCM 21823 / NBRC 15573 / CFN 42).